A 329-amino-acid polypeptide reads, in one-letter code: MSGKYLVTGGAGYVGSVVAQHLVEAGNEVVVLHNLSTGFRAGVPAGASFYRGDIRDQDFMRKVFRGRLSFDGVLHFAAFSQVGESVVKPEKYWDNNVGGTMALLEAMRGAGVRRLVFSSTAATYGEPEQVPIVESAPTRPTNPYGASKLAVDHMITGEAAAHGLGAVSVPYFNVAGANRGVRLVHDPESHLIPLVLQVAQGRREAISVYGDDYPTPDTCVRDYIHVADLAEAHLLAVRRRPGNEHLICNLGNGNGFSVREVVETVRRVTGHPIPEIMAPRRGRDPAVLVASAGTAREKLGWNPSRADLAIVSDAWEWHSSHPKGYDDRG.

NAD(+)-binding positions include 13–14, 33–38, 53–54, 76–80, Asn95, Thr120, Tyr144, Lys148, and Phe172; these read YV, HNLSTG, DI, and FAAFS. Substrate contacts are provided by Thr120 and Tyr144. The active-site Proton acceptor is Tyr144. Substrate-binding positions include Asn173, 190–191, 207–209, Arg221, and 281–284; these read HL, SVY, and RGRD.

This sequence belongs to the NAD(P)-dependent epimerase/dehydratase family. As to quaternary structure, homodimer. NAD(+) is required as a cofactor.

The catalysed reaction is UDP-alpha-D-glucose = UDP-alpha-D-galactose. The protein operates within carbohydrate metabolism; galactose metabolism. Its function is as follows. Involved in the metabolism of galactose. Catalyzes the conversion of UDP-galactose (UDP-Gal) to UDP-glucose (UDP-Glc) through a mechanism involving the transient reduction of NAD. In Streptomyces lividans, this protein is UDP-glucose 4-epimerase (galE).